Consider the following 492-residue polypeptide: NADH-ubiquinone oxidoreductase chain 4 (492 aa).

The next 15 helical transmembrane spans lie at 9 to 29 (LILTSLTPLIGVFILLLIPSA), 36 to 56 (NFALWISCLTFLFSLLLWIQF), 63 to 83 (FQFSTTFLWFPFFNLYYTIGI), 86 to 106 (ISLFFILLTTLLIISCILVSW), 115 to 135 (DYLICFLILEFLLIQVFSVLD), 136 to 156 (LLLFYIYFESVLIPMFLIVGV), 170 to 190 (FFLYTLIGSLLMLLALLNIYF), 211 to 231 (IFLWLSFFASFAVKIPMIPFH), 242 to 262 (PTAGSVILAGILLKMGGYGFL), 269 to 289 (FPVASIFFTPFIFTLSLVAII), 304 to 324 (IIAYSSVSHMGFVTIGIFSLN), 332 to 352 (ILLMLSHGLVSSALFLCIGVL), 370 to 390 (VMPLFGVFFLFFTFANLGFPG), 410 to 430 (TLTLFASLGMIFGAAYSIWLF), and 454 to 474 (FWILIPLAILILWMGIYPNSF).

It belongs to the complex I subunit 4 family.

The protein resides in the mitochondrion membrane. The enzyme catalyses a ubiquinone + NADH + 5 H(+)(in) = a ubiquinol + NAD(+) + 4 H(+)(out). In terms of biological role, core subunit of the mitochondrial membrane respiratory chain NADH dehydrogenase (Complex I) that is believed to belong to the minimal assembly required for catalysis. Complex I functions in the transfer of electrons from NADH to the respiratory chain. The immediate electron acceptor for the enzyme is believed to be ubiquinone. This is NADH-ubiquinone oxidoreductase chain 4 (ND4) from Chondrus crispus (Carrageen Irish moss).